Consider the following 801-residue polypeptide: Phenylalanine--tRNA ligase beta subunit (801 aa).

Positions 39-153 (AEGLSKLVVG…EGAIPGDSIF (115 aa)) constitute a tRNA-binding domain. In terms of domain architecture, B5 spans 406–481 (TEPVEVSTTL…RIYGYEKLPT (76 aa)). Positions 459, 465, 468, and 469 each coordinate Mg(2+). In terms of domain architecture, FDX-ACB spans 708–801 (TKYPSVSRDI…LVEKVNAEIR (94 aa)).

The protein belongs to the phenylalanyl-tRNA synthetase beta subunit family. Type 1 subfamily. In terms of assembly, tetramer of two alpha and two beta subunits. Mg(2+) is required as a cofactor.

It is found in the cytoplasm. The enzyme catalyses tRNA(Phe) + L-phenylalanine + ATP = L-phenylalanyl-tRNA(Phe) + AMP + diphosphate + H(+). The sequence is that of Phenylalanine--tRNA ligase beta subunit from Streptococcus agalactiae serotype V (strain ATCC BAA-611 / 2603 V/R).